The sequence spans 188 residues: uncharacterized protein (188 aa).

This is an uncharacterized protein from Homo sapiens (Human).